We begin with the raw amino-acid sequence, 358 residues long: Alanine racemase (358 aa).

Residue Lys-34 is the Proton acceptor; specific for D-alanine of the active site. At Lys-34 the chain carries N6-(pyridoxal phosphate)lysine. Arg-129 contacts substrate. Residue Tyr-254 is the Proton acceptor; specific for L-alanine of the active site. Residue Met-302 coordinates substrate.

Belongs to the alanine racemase family. Pyridoxal 5'-phosphate is required as a cofactor.

It catalyses the reaction L-alanine = D-alanine. The protein operates within amino-acid biosynthesis; D-alanine biosynthesis; D-alanine from L-alanine: step 1/1. In terms of biological role, catalyzes the interconversion of L-alanine and D-alanine. May also act on other amino acids. This chain is Alanine racemase (alr), found in Vibrio parahaemolyticus serotype O3:K6 (strain RIMD 2210633).